A 272-amino-acid polypeptide reads, in one-letter code: Bis(5'-nucleosyl)-tetraphosphatase, symmetrical (272 aa).

This sequence belongs to the Ap4A hydrolase family.

The catalysed reaction is P(1),P(4)-bis(5'-adenosyl) tetraphosphate + H2O = 2 ADP + 2 H(+). In terms of biological role, hydrolyzes diadenosine 5',5'''-P1,P4-tetraphosphate to yield ADP. This Chromohalobacter salexigens (strain ATCC BAA-138 / DSM 3043 / CIP 106854 / NCIMB 13768 / 1H11) protein is Bis(5'-nucleosyl)-tetraphosphatase, symmetrical.